The following is a 314-amino-acid chain: Palmitoyl-protein thioesterase 1 (314 aa).

The N-terminal stretch at 1-25 (MISICCSRFSCILFLLFLIFSLVLS) is a signal peptide. Intrachain disulfides connect Cys-53–Cys-54, Cys-104–Cys-136, and Cys-160–Cys-168. The active-site Nucleophile is the Ser-123. An N-linked (GlcNAc...) asparagine glycan is attached at Asn-240. Residues Asp-241 and His-295 contribute to the active site.

This sequence belongs to the palmitoyl-protein thioesterase family. As to expression, ubiquitously expressed.

The protein localises to the lysosome. The catalysed reaction is S-hexadecanoyl-L-cysteinyl-[protein] + H2O = L-cysteinyl-[protein] + hexadecanoate + H(+). Functionally, cleaves thioester-linked long fatty acyl groups such as palmitate from modified cysteine residues in proteins or peptides. The polypeptide is Palmitoyl-protein thioesterase 1 (Ppt1) (Drosophila melanogaster (Fruit fly)).